Here is a 313-residue protein sequence, read N- to C-terminus: Olfactory receptor 2B6 (313 aa).

At 1–25 (MNWVNDSIIQEFILLGFSDRPWLEF) the chain is on the extracellular side. Asn-5 carries an N-linked (GlcNAc...) asparagine glycan. A helical membrane pass occupies residues 26 to 49 (PLLVVFLISYTVTIFGNLTIILVS). Topologically, residues 50 to 57 (RLDTKLHT) are cytoplasmic. The helical transmembrane segment at 58–79 (PMYFFLTNLSLLDLCYTTCTVP) threads the bilayer. The Extracellular portion of the chain corresponds to 80–100 (QMLVNLCSIRKVISYRGCVAQ). Cys-97 and Cys-189 are oxidised to a cystine. The helical transmembrane segment at 101–120 (LFIFLALGATEYLLLAVMSF) threads the bilayer. At 121-139 (DRFVAICRPLHYSVIMHQR) the chain is on the cytoplasmic side. Residues 140-158 (LCLQLAAASWVTGFSNSVW) traverse the membrane as a helical segment. At 159-195 (LSTLTLQLPLCDPYVIDHFLCEVPALLKLSCVETTAN) the chain is on the extracellular side. Residues 196 to 219 (EAELFLVSELFHLIPLTLILISYA) traverse the membrane as a helical segment. Topologically, residues 220–236 (FIVRAVLRIQSAEGRQK) are cytoplasmic. Residues 237–259 (AFGTCGSHLIVVSLFYSTAVSVY) form a helical membrane-spanning segment. Residues 260–272 (LQPPSPSSKDQGK) are Extracellular-facing. A helical membrane pass occupies residues 273–292 (MVSLFYGIIAPMLNPLIYTL). Topologically, residues 293–313 (RNKEVKEGFKRLVARVFLIKK) are cytoplasmic.

The protein belongs to the G-protein coupled receptor 1 family.

The protein resides in the cell membrane. Its function is as follows. Odorant receptor. The sequence is that of Olfactory receptor 2B6 from Homo sapiens (Human).